We begin with the raw amino-acid sequence, 370 residues long: High affinity iron permease ftrA (370 aa).

A run of 7 helical transmembrane segments spans residues 5 to 25, 52 to 72, 88 to 108, 148 to 168, 179 to 199, 206 to 226, and 293 to 313; these read VFAV…SIIV, VWWG…GMIG, LWEG…GAAL, AMFL…VVFI, AFPL…YLLY, SLQI…AGLF, and YGSV…FVAM. Residues 335 to 370 form a disordered region; sequence RKSAEPGNGEQDVEVSTIPSDLQTESKIPKSGASLV. Polar residues predominate over residues 351 to 360; the sequence is TIPSDLQTES.

Belongs to the oxidase-dependent Fe transporter (OFeT) (TC 9.A.10.1) family.

It localises to the cell membrane. Functionally, high affinity iron permease; part of the reductive iron assimilatory system (RIA), a siderophore-independent high affinity iron uptake mechanism. The polypeptide is High affinity iron permease ftrA (Aspergillus fumigatus (strain ATCC MYA-4609 / CBS 101355 / FGSC A1100 / Af293) (Neosartorya fumigata)).